We begin with the raw amino-acid sequence, 238 residues long: Glyceraldehyde 3-phosphate phosphatase (238 aa).

It belongs to the HAD-like hydrolase superfamily. The cofactor is Mg(2+).

In terms of biological role, catalyzes the dephosphorylation of D,L-glyceraldehyde 3-phosphate in vitro. This chain is Glyceraldehyde 3-phosphate phosphatase, found in Pyrococcus abyssi (strain GE5 / Orsay).